Consider the following 216-residue polypeptide: Small ribosomal subunit protein uS5 (216 aa).

The segment at 1 to 55 (MDRKLENQKDLLNQDPKVELNSQSVAKNPLNSREVKPIQRRRPLRKNSRDKNSKP) is disordered. Positions 20–31 (LNSQSVAKNPLN) are enriched in polar residues. Residues 57-120 (FEERVIAIHR…KDAQNRLVSV (64 aa)) form the S5 DRBM domain.

Belongs to the universal ribosomal protein uS5 family. In terms of assembly, part of the 30S ribosomal subunit. Contacts proteins S4 and S8.

With S4 and S12 plays an important role in translational accuracy. Its function is as follows. Located at the back of the 30S subunit body where it stabilizes the conformation of the head with respect to the body. This Mesomycoplasma hyopneumoniae (strain J / ATCC 25934 / NCTC 10110) (Mycoplasma hyopneumoniae) protein is Small ribosomal subunit protein uS5.